Reading from the N-terminus, the 559-residue chain is Phosphatase and actin regulator 3 (559 aa).

A disordered region spans residues 1–65 (MAASEDGSGC…GIRTPPVRRN (65 aa)). Over residues 15 to 24 (GRSQSDPSVL) the composition is skewed to polar residues. A compositionally biased stretch (low complexity) spans 25–35 (TDSSATSSADA). Residue threonine 70 is modified to Phosphothreonine. Residues 82-342 (KKKNEKLKQT…VERGKEREEA (261 aa)) form a disordered region. The RPEL 1 repeat unit spans residues 93–118 (SALEKKMAGRQGREELIKKGLLEMME). Positions 95-113 (LEKKMAGRQGREELIKKGL) are enriched in basic and acidic residues. The segment covering 134-151 (SVQSEPPTPKSETLTSED) has biased composition (polar residues). Pro residues predominate over residues 229–240 (PSPPLLPTPPPK). Phosphoserine is present on serine 230. Threonine 236 carries the post-translational modification Phosphothreonine. Polar residues-rich tracts occupy residues 248–262 (NVTGQATLFQASSMK) and 270–281 (GQLSTPTGSPHL). Residues 293–342 (VIEELHRALATKHRQDSFQGRESKGSPKKRLDVRLSRTSSVERGKEREEA) are compositionally biased toward basic and acidic residues. Residues 346–369 (DGALENKRTAAKESEENKENLIIN) are a coiled coil. RPEL repeat units lie at residues 401–426 (ELLAVKLRNRPSKQELEDRNIFPRRT), 439–464 (MKLSKRLSQRPAVEELERRNILKQRN), and 477–502 (QRLTRKLNQRPTVDELRDRKILIRFS). The required for PP1CA binding and inhibition of PP1 activity stretch occupies residues 438–518 (EMKLSKRLSQ…KAQDYDRRAD (81 aa)). Positions 450 to 486 (AVEELERRNILKQRNDQTEQEERREIKQRLTRKLNQR) form a coiled coil.

It belongs to the phosphatase and actin regulator family. As to quaternary structure, binds actin and PPP1CA; thus inhibiting the protein phosphatase 1 (PP1) activity. Abundantly expressed in brain. Also found in several tumors such as lung carcinomas, nervous tumors and HL-60 leukemia cells. Isoform 3 is the major form in U-937, GOTO and HL-60 leukemia cells.

The protein localises to the nucleus matrix. The protein is Phosphatase and actin regulator 3 (PHACTR3) of Homo sapiens (Human).